Here is a 248-residue protein sequence, read N- to C-terminus: Zinc finger CCCH domain-containing protein 36 (248 aa).

Disordered regions lie at residues 1–37 (MDTRKRGRPEAGSFNSNGGGYKKSKQEMESYSTGLGS) and 87–110 (MQGSGNGGRFSGRGESGPGHVSNF). The C3H1-type 1 zinc-finger motif lies at 36 to 64 (GSKSKPCTKFFSTSGCPFGENCHFLHYVP). Over residues 90 to 103 (SGNGGRFSGRGESG) the composition is skewed to gly residues. One can recognise a KH domain in the interval 113–177 (SATARFSVDA…EQISEASAMV (65 aa)). Residues 188-209 (AKKPPGGGLGGGGGMGSEGKPH) form a disordered region. The segment covering 192 to 204 (PGGGLGGGGGMGS) has biased composition (gly residues). The C3H1-type 2 zinc finger occupies 213–240 (NFKTKICERFSKGNCTFGDRCHFAHGEA).

In Arabidopsis thaliana (Mouse-ear cress), this protein is Zinc finger CCCH domain-containing protein 36.